The primary structure comprises 332 residues: Biotin synthase (332 aa).

Residues 52-282 form the Radical SAM core domain; sequence FPENEVEFCS…KAELRLCGGR (231 aa). C70, C74, and C77 together coordinate [4Fe-4S] cluster. The [2Fe-2S] cluster site is built by C114, C147, C207, and R277.

This sequence belongs to the radical SAM superfamily. Biotin synthase family. As to quaternary structure, homodimer. Requires [4Fe-4S] cluster as cofactor. The cofactor is [2Fe-2S] cluster.

The enzyme catalyses (4R,5S)-dethiobiotin + (sulfur carrier)-SH + 2 reduced [2Fe-2S]-[ferredoxin] + 2 S-adenosyl-L-methionine = (sulfur carrier)-H + biotin + 2 5'-deoxyadenosine + 2 L-methionine + 2 oxidized [2Fe-2S]-[ferredoxin]. Its pathway is cofactor biosynthesis; biotin biosynthesis; biotin from 7,8-diaminononanoate: step 2/2. Functionally, catalyzes the conversion of dethiobiotin (DTB) to biotin by the insertion of a sulfur atom into dethiobiotin via a radical-based mechanism. The polypeptide is Biotin synthase (Aquifex aeolicus (strain VF5)).